A 114-amino-acid chain; its full sequence is MAPKKDKAPPPSSKPAKSGGKQKKKKWSKGKQKEKVNNLVLFDNATFDKLLSEAGKQKVVTAATLSERFRINGSLARRAIRELVSRGAIKMVCHHSSLQIYTRSTNEKVNPTAA.

Positions 1-33 are disordered; the sequence is MAPKKDKAPPPSSKPAKSGGKQKKKKWSKGKQK. Basic residues predominate over residues 20 to 30; it reads GKQKKKKWSKG.

It belongs to the eukaryotic ribosomal protein eS25 family.

This Amaranthus cruentus (Purple amaranth) protein is Small ribosomal subunit protein eS25 (RPS25).